We begin with the raw amino-acid sequence, 455 residues long: MSKENNYHHLAQKILELCGGKSNISSYTHCMTRLRITPYDESKADAQALRKLDGVLGVVEAETLQIILGTGVVNHVTAAFSKLVSAEEGADVKEAAAKKKADINRKNATPFKLFLRKIASIFIPLIPALVASGLITGITKAIIQAGWLSADSQIAIILTVIGSGLFTYLGILVGINASKEFGGTPALGALAGILIINPEIAKISLFGEELLPGRGGLIGVLFAAIFIAYTEQFIRRFIPQSLDIIVTPTVSLLITGIVTYVVFMPLGGFISDAITSGLLSILDIGGIAAGFILGATFLPLVVTGLHQGLTPVHMELINSIGNDPLLPILAMGGAGQVGAAFAVFVKTKKTTLRKAIAGGLPSGLLGIGEPLIFGVTLPLGRPFLTACLGAGIGGAFQAYFQVATIAIGVSGLPLSFLVLPSQIILYIVGLFISYAAGFLLTYAFGYKDEMASQFD.

Residues 8 to 90 (HHLAQKILEL…SKLVSAEEGA (83 aa)) form the PTS EIIB type-1 domain. C30 functions as the Phosphocysteine intermediate; for EIIB activity in the catalytic mechanism. The PTS EIIC type-1 domain maps to 116 to 455 (RKIASIFIPL…YKDEMASQFD (340 aa)). A run of 10 helical transmembrane segments spans residues 118–138 (IASI…ITGI), 154–174 (IAII…ILVG), 181–201 (FGGT…PEIA), 210–230 (LLPG…IAYT), 250–270 (VSLL…GGFI), 281–301 (ILDI…LPLV), 325–345 (LLPI…AVFV), 355–375 (AIAG…IFGV), 399–419 (YFQV…FLVL), and 423–443 (IILY…LTYA).

It is found in the cell membrane. Its function is as follows. The phosphoenolpyruvate-dependent sugar phosphotransferase system (sugar PTS), a major carbohydrate active -transport system, catalyzes the phosphorylation of incoming sugar substrates concomitantly with their translocation across the cell membrane. The chain is Putative PTS system EIIBC component YbbF (ybbF) from Bacillus subtilis (strain 168).